The sequence spans 430 residues: RPM1 interacting protein 13 (430 aa).

Residues 1–21 are disordered; it reads MGSGNHVDIVDVSSGEEDVDT. Positions 231 to 300 are nuclear localization; it reads RHRIRQPIPH…QVSQSSHHSS (70 aa).

Interacts with RPM1 (via its NB-ARC domain). Binds to ARF1 in the nucleus.

The protein localises to the nucleus. Resistance protein interactor which positively enhances RPM1-mediated resistance to necrotrophic bacterial pathogens Pseudomonas syringae pv. tomato DC3000 harboring type III effector protein AvrRpm1 or AvrB, but prevents the hypersensitive response (HR) controlled by RPM1. Together with ARF1, promotes leaf senescence and cell death, probably by facilitating the translocation of ARF1 into the nucleus, and activates ROS-related enzymes (e.g. POD, CAT and SOD). The polypeptide is RPM1 interacting protein 13 (Arabidopsis thaliana (Mouse-ear cress)).